A 218-amino-acid chain; its full sequence is Adenylate kinase (218 aa).

10–15 (GAGKGT) serves as a coordination point for ATP. An NMP region spans residues 30–59 (STGDMLRAAVKAGTPLGLEAKAIMDAGGLV). AMP is bound by residues Thr31, Arg36, 57 to 59 (GLV), 85 to 88 (GFPR), and Gln92. An LID region spans residues 122–159 (GRRVHLASGRTYHVTFNPPKAAGKDDVTGEDLVQRDDD). Residues Arg123 and 132–133 (TY) contribute to the ATP site. The AMP site is built by Arg156 and Arg167. Arg203 lines the ATP pocket.

The protein belongs to the adenylate kinase family. Monomer.

It localises to the cytoplasm. The enzyme catalyses AMP + ATP = 2 ADP. The protein operates within purine metabolism; AMP biosynthesis via salvage pathway; AMP from ADP: step 1/1. In terms of biological role, catalyzes the reversible transfer of the terminal phosphate group between ATP and AMP. Plays an important role in cellular energy homeostasis and in adenine nucleotide metabolism. In Chromobacterium violaceum (strain ATCC 12472 / DSM 30191 / JCM 1249 / CCUG 213 / NBRC 12614 / NCIMB 9131 / NCTC 9757 / MK), this protein is Adenylate kinase.